A 317-amino-acid chain; its full sequence is MSIAPDGRKLLRLEVRNAETPIERKPPWIKTRAKMGPEYKELKALVRREGLHTVCEEAGCPNIFECWEDREATFLIGGEQCTRRCDFCQIDTGKPADLDRDEPRRVAESVQAMGLRYSTVTGVARDDLPDGGAWLYAETVRQIKALNPNTGVELLIPDFNADPDQLRAVFESRPEVLAHNVETVPRIFKRIRPGFRYERSLAVITAARDYGLVTKSNLILGMGETPEEVRAALHDLHDAGCDIVTITQYLRPSPRHHPVERWVHPDEFVDHERYATEIGFAGVLAGPLVRSSYRAGKLYAQTVAKRSAVSLSNGEIA.

Cys55, Cys60, Cys66, Cys81, Cys85, Cys88, and Ser292 together coordinate [4Fe-4S] cluster. Residues 67-281 form the Radical SAM core domain; the sequence is WEDREATFLI…ERYATEIGFA (215 aa).

It belongs to the radical SAM superfamily. Lipoyl synthase family. [4Fe-4S] cluster is required as a cofactor.

The protein resides in the cytoplasm. It catalyses the reaction [[Fe-S] cluster scaffold protein carrying a second [4Fe-4S](2+) cluster] + N(6)-octanoyl-L-lysyl-[protein] + 2 oxidized [2Fe-2S]-[ferredoxin] + 2 S-adenosyl-L-methionine + 4 H(+) = [[Fe-S] cluster scaffold protein] + N(6)-[(R)-dihydrolipoyl]-L-lysyl-[protein] + 4 Fe(3+) + 2 hydrogen sulfide + 2 5'-deoxyadenosine + 2 L-methionine + 2 reduced [2Fe-2S]-[ferredoxin]. Its pathway is protein modification; protein lipoylation via endogenous pathway; protein N(6)-(lipoyl)lysine from octanoyl-[acyl-carrier-protein]: step 2/2. In terms of biological role, catalyzes the radical-mediated insertion of two sulfur atoms into the C-6 and C-8 positions of the octanoyl moiety bound to the lipoyl domains of lipoate-dependent enzymes, thereby converting the octanoylated domains into lipoylated derivatives. The protein is Lipoyl synthase of Mycolicibacterium gilvum (strain PYR-GCK) (Mycobacterium gilvum (strain PYR-GCK)).